The chain runs to 516 residues: GMP synthase [glutamine-hydrolyzing] (516 aa).

In terms of domain architecture, Glutamine amidotransferase type-1 spans 5–199 (SIIVLDFGSQ…ARNICGVTEK (195 aa)). Cysteine 82 (nucleophile) is an active-site residue. Active-site residues include histidine 173 and glutamate 175. The 192-residue stretch at 200–391 (WKMEHFLKEQ…LGLPESMINR (192 aa)) folds into the GMPS ATP-PPase domain. 227–233 (SGGVDSS) lines the ATP pocket.

As to quaternary structure, homodimer.

The enzyme catalyses XMP + L-glutamine + ATP + H2O = GMP + L-glutamate + AMP + diphosphate + 2 H(+). It functions in the pathway purine metabolism; GMP biosynthesis; GMP from XMP (L-Gln route): step 1/1. Catalyzes the synthesis of GMP from XMP. The polypeptide is GMP synthase [glutamine-hydrolyzing] (Sulfurimonas denitrificans (strain ATCC 33889 / DSM 1251) (Thiomicrospira denitrificans (strain ATCC 33889 / DSM 1251))).